A 433-amino-acid polypeptide reads, in one-letter code: Homoserine dehydrogenase (433 aa).

NADPH contacts are provided by Thr12, Val13, and Lys102. Val13 lines the NAD(+) pocket. Residues Val13 and Lys102 each contribute to the NADP(+) site. Residues Glu126, Val129, Gly131, and Ile133 each coordinate Na(+). NADP(+) contacts are provided by Gly184 and Glu187. L-homoserine contacts are provided by Glu187 and Asp198. Lys202 serves as the catalytic Proton donor. Residue Gly303 coordinates NADPH. Gly303 is an NAD(+) binding site. Gly303 contributes to the NADP(+) binding site. The 78-residue stretch at 356–433 (YCRFLCADVP…EIPSVIRVLS (78 aa)) folds into the ACT domain.

It belongs to the homoserine dehydrogenase family. It depends on a metal cation as a cofactor.

It catalyses the reaction L-homoserine + NADP(+) = L-aspartate 4-semialdehyde + NADPH + H(+). The catalysed reaction is L-homoserine + NAD(+) = L-aspartate 4-semialdehyde + NADH + H(+). It participates in amino-acid biosynthesis; L-methionine biosynthesis via de novo pathway; L-homoserine from L-aspartate: step 3/3. The protein operates within amino-acid biosynthesis; L-threonine biosynthesis; L-threonine from L-aspartate: step 3/5. Functionally, catalyzes the conversion of L-aspartate-beta-semialdehyde (L-Asa) to L-homoserine (L-Hse), the third step in the biosynthesis of threonine and methionine from aspartate. In Synechocystis sp. (strain ATCC 27184 / PCC 6803 / Kazusa), this protein is Homoserine dehydrogenase (hom).